Reading from the N-terminus, the 266-residue chain is NADP-dependent mannitol dehydrogenase (266 aa).

Positions 31, 33, 107, and 140 each coordinate NADP(+). The Proton donor role is filled by Ser-159. NADP(+)-binding residues include Tyr-174, Lys-178, Ile-206, and Thr-208. The Proton acceptor role is filled by Tyr-174. The active-site Lowers pKa of active site Tyr is the Lys-178.

Belongs to the short-chain dehydrogenases/reductases (SDR) family. As to quaternary structure, homotetramer.

Its subcellular location is the vacuole. It catalyses the reaction D-mannitol + NADP(+) = D-fructose + NADPH + H(+). In Alternaria alternata (Alternaria rot fungus), this protein is NADP-dependent mannitol dehydrogenase.